The sequence spans 189 residues: UPF0301 protein PFL_5830 (189 aa).

Belongs to the UPF0301 (AlgH) family.

The protein is UPF0301 protein PFL_5830 of Pseudomonas fluorescens (strain ATCC BAA-477 / NRRL B-23932 / Pf-5).